A 116-amino-acid polypeptide reads, in one-letter code: Protein Wnt-5(III) (116 aa).

Serine 1 carries the O-palmitoleoyl serine; by PORCN lipid modification. Asparagine 69 carries N-linked (GlcNAc...) asparagine glycosylation. A disulfide bridge connects residues cysteine 82 and cysteine 97.

The protein belongs to the Wnt family. Palmitoleoylation is required for efficient binding to frizzled receptors. Depalmitoleoylation leads to Wnt signaling pathway inhibition.

It localises to the secreted. It is found in the extracellular space. Its subcellular location is the extracellular matrix. Ligand for members of the frizzled family of seven transmembrane receptors. Probable developmental protein. May be a signaling molecule which affects the development of discrete regions of tissues. Is likely to signal over only few cell diameters. This is Protein Wnt-5(III) (WNT-5(III)) from Eptatretus stoutii (Pacific hagfish).